The chain runs to 185 residues: Coiled-coil domain-containing protein 32 (185 aa).

Residues 78 to 98 are a coiled coil; sequence LASLEKKLRRIKGLNQEVTSK. Residues 159-185 are disordered; the sequence is IPPESQVEKPVAEDEPAAGDKPAAAEQ.

As to quaternary structure, interacts with AP2S1; the interaction is direct and mediates association with adaptor protein complex 2 (AP-2).

Its subcellular location is the membrane. It is found in the coated pit. Functionally, regulates clathrin-mediated endocytsois of cargos such as transferrin probably through the association and modulation of adaptor protein complex 2 (AP-2). Has a role in ciliogenesis. Required for proper cephalic and left/right axis development. The polypeptide is Coiled-coil domain-containing protein 32 (Homo sapiens (Human)).